The chain runs to 335 residues: Phenylalanine--tRNA ligase alpha subunit (335 aa).

A Mg(2+)-binding site is contributed by Glu-262.

It belongs to the class-II aminoacyl-tRNA synthetase family. Phe-tRNA synthetase alpha subunit type 1 subfamily. Tetramer of two alpha and two beta subunits. It depends on Mg(2+) as a cofactor.

The protein localises to the cytoplasm. The catalysed reaction is tRNA(Phe) + L-phenylalanine + ATP = L-phenylalanyl-tRNA(Phe) + AMP + diphosphate + H(+). The protein is Phenylalanine--tRNA ligase alpha subunit of Prochlorococcus marinus subsp. pastoris (strain CCMP1986 / NIES-2087 / MED4).